Here is a 440-residue protein sequence, read N- to C-terminus: N-succinylarginine dihydrolase (440 aa).

Substrate is bound by residues 17–26 (GGLSPGNLAS), Asn-108, and 135–136 (HR). The disordered stretch occupies residues 17–37 (GGLSPGNLASQSHVGEPSHPR). Residue Glu-172 is part of the active site. A substrate-binding site is contributed by Arg-210. His-246 is a catalytic residue. Substrate contacts are provided by Asp-248 and Asn-358. The Nucleophile role is filled by Cys-364.

The protein belongs to the succinylarginine dihydrolase family. Homodimer.

It catalyses the reaction N(2)-succinyl-L-arginine + 2 H2O + 2 H(+) = N(2)-succinyl-L-ornithine + 2 NH4(+) + CO2. It participates in amino-acid degradation; L-arginine degradation via AST pathway; L-glutamate and succinate from L-arginine: step 2/5. Its function is as follows. Catalyzes the hydrolysis of N(2)-succinylarginine into N(2)-succinylornithine, ammonia and CO(2). The chain is N-succinylarginine dihydrolase from Myxococcus xanthus (strain DK1622).